A 351-amino-acid polypeptide reads, in one-letter code: DNA polymerase IV (351 aa).

Residues isoleucine 4–glycine 185 enclose the UmuC domain. Residues aspartate 8 and aspartate 103 each coordinate Mg(2+). The active site involves glutamate 104.

The protein belongs to the DNA polymerase type-Y family. Monomer. Mg(2+) serves as cofactor.

It is found in the cytoplasm. It carries out the reaction DNA(n) + a 2'-deoxyribonucleoside 5'-triphosphate = DNA(n+1) + diphosphate. Its function is as follows. Poorly processive, error-prone DNA polymerase involved in untargeted mutagenesis. Copies undamaged DNA at stalled replication forks, which arise in vivo from mismatched or misaligned primer ends. These misaligned primers can be extended by PolIV. Exhibits no 3'-5' exonuclease (proofreading) activity. May be involved in translesional synthesis, in conjunction with the beta clamp from PolIII. The chain is DNA polymerase IV from Salmonella paratyphi B (strain ATCC BAA-1250 / SPB7).